Reading from the N-terminus, the 98-residue chain is Small ribosomal subunit protein bS6 (98 aa).

The protein belongs to the bacterial ribosomal protein bS6 family.

Functionally, binds together with bS18 to 16S ribosomal RNA. In Staphylococcus carnosus (strain TM300), this protein is Small ribosomal subunit protein bS6.